The sequence spans 397 residues: MEKQEDFKLNTHSAVYYHWRVWELTGLMRPPGVSSLLYVVYSITVNLVVTVLFPLSLLARLLFTTNMAGLCENLTITITDIVANLKFANVYMVRKQLHEIRSLLRLMDARARLVGDPEEISALRKEVNIAQGTFRTFASIFVFGTTLSCVRVVVRPDRELLYPAWFGVDWMHSTRNYVLINIYQLFGLIVQAIQNCASDSYPPAFLCLLTGHMRALELRVRRIGCRTEKSNKGQTYEAWREEVYQELIECIRDLARVHRLREIIQRVLSVPCMAQFVCSAAVQCTVAMHFLYVADDHDHTAMIISIVFFSAVTLEVFVICYFGDRMRTQSEALCDAFYDCNWIEQLPKFKRELLFTLARTQRPSLIYAGNYIALSLETFEQVMRFTYSVFTLLLRAK.

Residues 1–38 are Cytoplasmic-facing; it reads MEKQEDFKLNTHSAVYYHWRVWELTGLMRPPGVSSLLY. The helical transmembrane segment at 39 to 59 threads the bilayer; it reads VVYSITVNLVVTVLFPLSLLA. Residues 60–72 lie on the Extracellular side of the membrane; that stretch reads RLLFTTNMAGLCE. A helical transmembrane segment spans residues 73–92; that stretch reads NLTITITDIVANLKFANVYM. Over 93–131 the chain is Cytoplasmic; sequence VRKQLHEIRSLLRLMDARARLVGDPEEISALRKEVNIAQ. The chain crosses the membrane as a helical span at residues 132–150; it reads GTFRTFASIFVFGTTLSCV. Over 151 to 176 the chain is Extracellular; it reads RVVVRPDRELLYPAWFGVDWMHSTRN. A helical membrane pass occupies residues 177–197; sequence YVLINIYQLFGLIVQAIQNCA. Over 198-272 the chain is Cytoplasmic; that stretch reads SDSYPPAFLC…IIQRVLSVPC (75 aa). The helical transmembrane segment at 273 to 293 threads the bilayer; it reads MAQFVCSAAVQCTVAMHFLYV. At 294–301 the chain is on the extracellular side; the sequence is ADDHDHTA. A helical membrane pass occupies residues 302 to 322; the sequence is MIISIVFFSAVTLEVFVICYF. The Cytoplasmic segment spans residues 323 to 363; the sequence is GDRMRTQSEALCDAFYDCNWIEQLPKFKRELLFTLARTQRP. Residues 364-383 form a helical membrane-spanning segment; the sequence is SLIYAGNYIALSLETFEQVM. At 384 to 397 the chain is on the extracellular side; the sequence is RFTYSVFTLLLRAK.

Belongs to the insect chemoreceptor superfamily. Heteromeric odorant receptor channel (TC 1.A.69) family. Or2a subfamily. In terms of assembly, interacts with Orco. Complexes exist early in the endomembrane system in olfactory sensory neurons (OSNs), coupling these complexes to the conserved ciliary trafficking pathway. In terms of tissue distribution, expressed in 20 sensory neurons on the distal edge of the antenna.

It is found in the cell membrane. In terms of biological role, odorant receptor which mediates acceptance or avoidance behavior, depending on its substrates. The odorant receptor repertoire encodes a large collection of odor stimuli that vary widely in identity, intensity, and duration. May form a complex with Orco to form odorant-sensing units, providing sensitive and prolonged odorant signaling and calcium permeability. The protein is Odorant receptor 2a (Or2a) of Drosophila melanogaster (Fruit fly).